The sequence spans 391 residues: tRNA (cytosine(38)-C(5))-methyltransferase (391 aa).

The SAM-dependent MTase C5-type domain occupies 4 to 391; that stretch reads LRVLELYSGI…VSKLLTVLCE (388 aa). Residues 13–15, Asp34, 57–58, and Ser76 contribute to the S-adenosyl-L-methionine site; these read IGG and IE. Cys79 is a catalytic residue. Ser376 lines the S-adenosyl-L-methionine pocket.

The protein belongs to the class I-like SAM-binding methyltransferase superfamily. C5-methyltransferase family.

The protein resides in the cytoplasm. It carries out the reaction cytidine(38) in tRNA + S-adenosyl-L-methionine = 5-methylcytidine(38) in tRNA + S-adenosyl-L-homocysteine + H(+). Its function is as follows. Specifically methylates cytosine 38 in the anticodon loop of tRNA(Asp). Has higher activity on tRNA(Asp) modified with queuosine at position 34. This Rattus norvegicus (Rat) protein is tRNA (cytosine(38)-C(5))-methyltransferase (Trdmt1).